An 815-amino-acid polypeptide reads, in one-letter code: Probable disease resistance protein At5g66910 (815 aa).

The 150-residue stretch at 1–150 (MVVVDWLGLG…NINKKLDRLS (150 aa)) folds into the RPW8 domain. NB-ARC domains lie at 156 to 283 (PLVS…DVWQ) and 341 to 440 (SPDE…DIWM). An ATP-binding site is contributed by 196–203 (GPPGCGKT). LRR repeat units lie at residues 656–678 (NLQE…IPEV), 680–702 (SLKT…IGNL), 704–726 (RLEV…TERL), and 728–750 (NLRS…IGKL).

It belongs to the disease resistance NB-LRR family.

In terms of biological role, probable disease resistance protein. This chain is Probable disease resistance protein At5g66910, found in Arabidopsis thaliana (Mouse-ear cress).